A 184-amino-acid chain; its full sequence is UPF0302 protein OB1778 (184 aa).

It belongs to the UPF0302 family.

This Oceanobacillus iheyensis (strain DSM 14371 / CIP 107618 / JCM 11309 / KCTC 3954 / HTE831) protein is UPF0302 protein OB1778.